The primary structure comprises 337 residues: MWLLYLILGSVESQLLPGNNHTTECNIPGNFMCSNGRCIPGGWQCDGNPDCFDESDEKECPRARSRCGPNFFPCTSGIHCIIARFQCNGFEDCPDGSDEENCTAHPLLCSNSRFHCKNHLCIDKSFVCDGQNNCLDNSDEEHCHSPQEPGSEQDYVSSENQLLYYPSITYTIIGSSVIFVLVVALLALVLHHQRKRNLMSLPVHRLQHPLLLSRLVVLDHPHHCRVTYNVNNGIQYMSGQGYQQPVSVESPPSYTEAVLDHSSRPPWFDLPPPPYPSDMESVSQTELPPYRSRTGSSASAGSTEHPRGTPCGTESPTEPQDPTAAPSDDLPSTEVDV.

An N-terminal signal peptide occupies residues 1 to 13 (MWLLYLILGSVES). Topologically, residues 14–169 (QLLPGNNHTT…NQLLYYPSIT (156 aa)) are extracellular. An N-linked (GlcNAc...) asparagine glycan is attached at N20. LDL-receptor class A domains lie at 24–61 (ECNI…KECP), 66–103 (RCGP…ENCT), and 108–144 (LCSN…EHCH). Intrachain disulfides connect C25–C38, C33–C51, C45–C60, C67–C80, C74–C93, C87–C102, C109–C121, C116–C134, and C128–C143. N101 carries an N-linked (GlcNAc...) asparagine glycan. The helical transmembrane segment at 170–190 (YTIIGSSVIFVLVVALLALVL) threads the bilayer. Over 191–337 (HHQRKRNLMS…DDLPSTEVDV (147 aa)) the chain is Cytoplasmic. A compositionally biased stretch (polar residues) spans 243–253 (QQPVSVESPPS). The segment at 243 to 337 (QQPVSVESPP…DDLPSTEVDV (95 aa)) is disordered. Residues 291–303 (RSRTGSSASAGST) are compositionally biased toward low complexity.

It belongs to the LDLR family.

The protein resides in the cell membrane. This is Low-density lipoprotein receptor class A domain-containing protein 3 from Xenopus tropicalis (Western clawed frog).